Consider the following 288-residue polypeptide: NAD(P)H quinone oxidoreductase YCP4 (288 aa).

The Flavodoxin-like domain maps to 3 to 192; it reads IAIIQYSTYG…EIAEKQGEAF (190 aa). Residues 9-13 and 110-164 contribute to the FMN site; these read STYGH and VFVS…SPYG. Residues 202–288 form a disordered region; sequence GSKKTNTTTT…KSSCSKCIIM (87 aa). The segment covering 205–254 has biased composition (low complexity); it reads KTNTTTTSKSAATSDAAGTTSGTAAGTSAATGAATGTSAPKESTKEASSS. A compositionally biased stretch (polar residues) spans 261–288; it reads NGTATRTQQSTKAPETAEKSSCSKCIIM.

Belongs to the WrbA family. FMN serves as cofactor.

The protein localises to the cell membrane. The enzyme catalyses a quinone + NADH + H(+) = a quinol + NAD(+). It carries out the reaction a quinone + NADPH + H(+) = a quinol + NADP(+). Functionally, flavodoxin-like protein (FLP) that plays a role in cell wall integrity, oxidative stress protection and virulence. FLPs act as NAD(P)H quinone oxidoreductases. Reduces ubiquinone (coenzyme Q), enabling it to serve as an antioxidant in the membrane. The protein is NAD(P)H quinone oxidoreductase YCP4 of Candida albicans (strain SC5314 / ATCC MYA-2876) (Yeast).